Here is a 204-residue protein sequence, read N- to C-terminus: Wound-induced proteinase inhibitor 2 (204 aa).

The first 25 residues, 1–25, serve as a signal peptide directing secretion; it reads MAVPKEVSFLASLLVLGILLLHVDA. Tandem repeats lie at residues 25–67, 68–125, and 126–183. Cystine bridges form between C28/C100, C38/C75, C41/C59, C42/C71, C48/C84, and C99/C117. The 4; truncated repeat unit spans residues 184–204; the sequence is PKACPKNCDPNIAYSLCLYEK.

This sequence belongs to the protease inhibitor I20 (potato type II proteinase inhibitor) family.

This chain is Wound-induced proteinase inhibitor 2 (PIN2), found in Capsicum annuum (Capsicum pepper).